Reading from the N-terminus, the 113-residue chain is Probable leucocin-A immunity protein (113 aa).

The protein belongs to the immunity protein EntA family.

Its function is as follows. Imparts immunity to leucocin-A to naturally sensitive host strains. This is Probable leucocin-A immunity protein from Leuconostoc gelidum.